The following is a 437-amino-acid chain: Transcription factor TGAL5 (437 aa).

A disordered region spans residues 33-75 (QEPYSNSQSVGSTTDSSSAQNTMSQAELVSPASMRSDSGQEQQ). A compositionally biased stretch (low complexity) spans 37–50 (SNSQSVGSTTDSSS). The span at 51 to 75 (AQNTMSQAELVSPASMRSDSGQEQQ) shows a compositional bias: polar residues. The bZIP domain maps to 126-170 (DAKTERRLAQNREAARKSRLRKKAYVQQLETSRIRLQQIEQELQR). The basic motif stretch occupies residues 128–148 (KTERRLAQNREAARKSRLRKK). The tract at residues 154–168 (LETSRIRLQQIEQEL) is leucine-zipper. Positions 191-405 (AVMFDMDYTR…RALSSLWASR (215 aa)) constitute a DOG1 domain.

This sequence belongs to the bZIP family. As to quaternary structure, interacts with NPR5/NH4, NH5.1 and NH5.2.

It localises to the nucleus. Transcriptional regulator involved in defense response. This Oryza sativa subsp. japonica (Rice) protein is Transcription factor TGAL5.